A 92-amino-acid polypeptide reads, in one-letter code: Small ribosomal subunit protein bS20 (92 aa).

The segment at M1 to S23 is disordered. A compositionally biased stretch (basic residues) spans A7–H20.

It belongs to the bacterial ribosomal protein bS20 family.

Functionally, binds directly to 16S ribosomal RNA. The protein is Small ribosomal subunit protein bS20 of Pseudomonas fluorescens (strain SBW25).